Consider the following 508-residue polypeptide: Glutamyl-tRNA(Gln) amidotransferase subunit B, mitochondrial (508 aa).

The protein belongs to the GatB/GatE family. GatB subfamily. As to quaternary structure, subunit of the heterotrimeric GatFAB amidotransferase (AdT) complex, composed of A, B and F subunits.

The protein localises to the mitochondrion. It catalyses the reaction L-glutamyl-tRNA(Gln) + L-glutamine + ATP + H2O = L-glutaminyl-tRNA(Gln) + L-glutamate + ADP + phosphate + H(+). Allows the formation of correctly charged Gln-tRNA(Gln) through the transamidation of misacylated Glu-tRNA(Gln) in the mitochondria. The reaction takes place in the presence of glutamine and ATP through an activated gamma-phospho-Glu-tRNA(Gln). This is Glutamyl-tRNA(Gln) amidotransferase subunit B, mitochondrial from Scheffersomyces stipitis (strain ATCC 58785 / CBS 6054 / NBRC 10063 / NRRL Y-11545) (Yeast).